Reading from the N-terminus, the 260-residue chain is PsbP domain-containing protein 4, chloroplastic (260 aa).

This sequence belongs to the PsbP family.

Its subcellular location is the plastid. It localises to the chloroplast thylakoid lumen. This chain is PsbP domain-containing protein 4, chloroplastic (PPD4), found in Arabidopsis thaliana (Mouse-ear cress).